The primary structure comprises 308 residues: Putative S-adenosyl-L-methionine-dependent methyltransferase MAB_4585c (308 aa).

S-adenosyl-L-methionine contacts are provided by residues Asp-131 and 160–161 (DL).

This sequence belongs to the UPF0677 family.

Exhibits S-adenosyl-L-methionine-dependent methyltransferase activity. This chain is Putative S-adenosyl-L-methionine-dependent methyltransferase MAB_4585c, found in Mycobacteroides abscessus (strain ATCC 19977 / DSM 44196 / CCUG 20993 / CIP 104536 / JCM 13569 / NCTC 13031 / TMC 1543 / L948) (Mycobacterium abscessus).